A 137-amino-acid chain; its full sequence is uncharacterized protein (137 aa).

The first 19 residues, 1–19, serve as a signal peptide directing secretion; the sequence is MVAFYGIFLFGTVYLFGLA.

This is an uncharacterized protein from Acanthamoeba polyphaga (Amoeba).